The following is a 266-amino-acid chain: Interleukin-1 beta (266 aa).

Positions 1–113 (MAPVPEPINE…ETSSDEFLCD (113 aa)) are excised as a propeptide.

The protein belongs to the IL-1 family. Monomer. In its precursor form, weakly interacts with full-length MEFV; the mature cytokine does not interact at all. Interacts with integrins ITGAV:ITGBV and ITGA5:ITGB1; integrin-binding is required for IL1B signaling. Interacts with cargo receptor TMED10; the interaction is direct and is required for the secretion of IL1B mature form. Interacts with HSP90AB1; the interaction facilitates cargo translocation into the ERGIC. Interacts with HSP90B1; the interaction facilitates cargo translocation into the ERGIC.

Its subcellular location is the cytoplasm. The protein resides in the cytosol. The protein localises to the secreted. It is found in the lysosome. It localises to the extracellular exosome. In terms of biological role, potent pro-inflammatory cytokine. Initially discovered as the major endogenous pyrogen, induces prostaglandin synthesis, neutrophil influx and activation, T-cell activation and cytokine production, B-cell activation and antibody production, and fibroblast proliferation and collagen production. Promotes Th17 differentiation of T-cells. Synergizes with IL12/interleukin-12 to induce IFNG synthesis from T-helper 1 (Th1) cells. Plays a role in angiogenesis by inducing VEGF production synergistically with TNF and IL6. Involved in transduction of inflammation downstream of pyroptosis: its mature form is specifically released in the extracellular milieu by passing through the gasdermin-D (GSDMD) pore. The protein is Interleukin-1 beta (IL1B) of Cervus elaphus (Red deer).